The chain runs to 146 residues: MSETFTKGMARNIYFGGSVFFILLFLALTYHTEKTLPERTNEAAMSAAVVRGKLVWEQNNCVGCHTLLGEGAYFAPELGNVVGRRGGEEGFNTFLQAWMNIQPLNVPGRRAMPQFHLSEGQVDDLAEFLKWSSKIDTNQWPPNKEG.

The helical; Signal-anchor transmembrane segment at 13–29 (IYFGGSVFFILLFLALT) threads the bilayer. The heme c site is built by cysteine 61, cysteine 64, and histidine 65.

In terms of assembly, heterodimer of cytochromes b (large subunit) and c (small subunit).

The protein resides in the cell membrane. Its function is as follows. Component of the anaerobic respiratory chain that transforms nitrate to dinitrogen (denitrification). The sequence is that of Nitric oxide reductase subunit C (norC) from Pseudomonas aeruginosa (strain ATCC 15692 / DSM 22644 / CIP 104116 / JCM 14847 / LMG 12228 / 1C / PRS 101 / PAO1).